Consider the following 298-residue polypeptide: Golgi to ER traffic protein 2 (298 aa).

The Cytoplasmic segment spans residues 1–164 (MSEPVVDTAE…LEYNTYNQKL (164 aa)). The tract at residues 40–92 (ILSQGSSVKTSGVKSVLDQEKEATPSHDEDPEIQDITEITTPPPRTPPIGEDA) is disordered. Positions 42 to 55 (SQGSSVKTSGVKSV) are enriched in low complexity. Residues 56–67 (LDQEKEATPSHD) show a composition bias toward basic and acidic residues. The helical transmembrane segment at 165–185 (WKFRFLLVRVSVTLFNFFYHY) threads the bilayer. Over 186–211 (INLSNFHASNYAYVRDLSSEKYPVRD) the chain is Lumenal. A helical transmembrane segment spans residues 212 to 231 (FFTWFATTEVVLVAAYYSIF). The Cytoplasmic portion of the chain corresponds to 232-275 (HSLGLFHAANQNSFVLKAMSMGSMVLPQLEHYKPLVARFLGYYE). Residues 276–296 (LLGIVLGDLSLVIVLFGLLSF) form a helical membrane-spanning segment. At 297 to 298 (AN) the chain is on the lumenal side.

It belongs to the GET2 family. Component of the Golgi to ER traffic (GET) complex, which is composed of GET1, GET2 and GET3. Within the complex, GET1 and GET2 form a heterotetramer which is stabilized by phosphatidylinositol binding and which binds to the GET3 homodimer.

Its subcellular location is the endoplasmic reticulum membrane. The protein resides in the golgi apparatus membrane. Functionally, required for the post-translational delivery of tail-anchored (TA) proteins to the endoplasmic reticulum. Together with GET1, acts as a membrane receptor for soluble GET3, which recognizes and selectively binds the transmembrane domain of TA proteins in the cytosol. The GET complex cooperates with the HDEL receptor ERD2 to mediate the ATP-dependent retrieval of resident ER proteins that contain a C-terminal H-D-E-L retention signal from the Golgi to the ER. This chain is Golgi to ER traffic protein 2, found in Candida albicans (strain SC5314 / ATCC MYA-2876) (Yeast).